We begin with the raw amino-acid sequence, 719 residues long: Histone-lysine N-methyltransferase SETDB2 (719 aa).

Positions 72-82 (SQKEVNAQSSD) are enriched in polar residues. The disordered stretch occupies residues 72–102 (SQKEVNAQSSDPMPVTQKEQENKSNAFPSTS). In terms of domain architecture, MBD spans 157-229 (LNLKGENPLQ…DNFSFNTYVQ (73 aa)). In terms of domain architecture, Pre-SET spans 291 to 364 (DSCDCSEGCI…LCQNRVVQHG (74 aa)). C293, C295, C299, C305, C307, C345, C349, C351, and C356 together coordinate Zn(2+). An SET domain is found at 367-694 (VRLQVFKTEQ…ARTELTWDYG (328 aa)). Residues 377 to 379 (KGW) and D418 contribute to the S-adenosyl-L-methionine site. Residues 508–547 (FVSSESVTPEDNDGFKPPREHLNSKTKGAQKDSSSNHVDE) are disordered. Basic and acidic residues predominate over residues 520-530 (DGFKPPREHLN). The span at 532-543 (KTKGAQKDSSSN) shows a compositional bias: polar residues. Residues R648 and 651–652 (NH) contribute to the S-adenosyl-L-methionine site. Residues C654, C707, C709, and C714 each contribute to the Zn(2+) site.

Belongs to the class V-like SAM-binding methyltransferase superfamily. As to expression, ubiquitous. Highest expression in heart, testis and ovary.

The protein resides in the nucleus. The protein localises to the chromosome. It carries out the reaction N(6),N(6)-dimethyl-L-lysyl(9)-[histone H3] + S-adenosyl-L-methionine = N(6),N(6),N(6)-trimethyl-L-lysyl(9)-[histone H3] + S-adenosyl-L-homocysteine + H(+). In terms of biological role, histone methyltransferase involved in left-right axis specification in early development and mitosis. Specifically trimethylates 'Lys-9' of histone H3 (H3K9me3). H3K9me3 is a specific tag for epigenetic transcriptional repression that recruits HP1 (CBX1, CBX3 and/or CBX5) proteins to methylated histones. Contributes to H3K9me3 in both the interspersed repetitive elements and centromere-associated repeats. Plays a role in chromosome condensation and segregation during mitosis. This is Histone-lysine N-methyltransferase SETDB2 (SETDB2) from Homo sapiens (Human).